The primary structure comprises 130 residues: Small ribosomal subunit protein uS8 (130 aa).

Belongs to the universal ribosomal protein uS8 family. In terms of assembly, part of the 30S ribosomal subunit. Contacts proteins S5 and S12.

Its function is as follows. One of the primary rRNA binding proteins, it binds directly to 16S rRNA central domain where it helps coordinate assembly of the platform of the 30S subunit. This Cronobacter sakazakii (strain ATCC BAA-894) (Enterobacter sakazakii) protein is Small ribosomal subunit protein uS8.